Here is a 569-residue protein sequence, read N- to C-terminus: GATOR1 complex protein NPRL3 (569 aa).

Disordered regions lie at residues 27 to 60 (PFQR…EQDG) and 416 to 477 (PSEE…GDSP). Composition is skewed to polar residues over residues 34 to 52 (HPAS…SNTG) and 438 to 468 (SLST…NSSA). A Phosphoserine modification is found at S476.

The protein belongs to the NPR3 family. Within the GATOR complex, component of the GATOR1 subcomplex, made of DEPDC5, NPRL2 and NPRL3. GATOR1 mediates the strong interaction of the GATOR complex with small GTPases Rag (RagA/RRAGA, RagB/RRAGB, RagC/RRAGC and/or RagD/RRAGD) heterodimers. GATOR1 interacts with GPR155/LYCHOS; interaction takes place in presence of cholesterol and prevents interaction between GATOR1 and KICSTOR. Widely expressed. Expressed in the frontal lobe cortex as well as in the temporal, parietal, and occipital lobes.

Its subcellular location is the lysosome membrane. Functionally, as a component of the GATOR1 complex functions as an inhibitor of the amino acid-sensing branch of the mTORC1 pathway. In response to amino acid depletion, the GATOR1 complex has GTPase activating protein (GAP) activity and strongly increases GTP hydrolysis by RagA/RRAGA (or RagB/RRAGB) within heterodimeric Rag complexes, thereby turning them into their inactive GDP-bound form, releasing mTORC1 from lysosomal surface and inhibiting mTORC1 signaling. In the presence of abundant amino acids, the GATOR1 complex is negatively regulated by GATOR2, the other GATOR subcomplex, in this amino acid-sensing branch of the TORC1 pathway. The polypeptide is GATOR1 complex protein NPRL3 (Homo sapiens (Human)).